Reading from the N-terminus, the 431-residue chain is Histidine--tRNA ligase (431 aa).

Belongs to the class-II aminoacyl-tRNA synthetase family. As to quaternary structure, homodimer.

It is found in the cytoplasm. It carries out the reaction tRNA(His) + L-histidine + ATP = L-histidyl-tRNA(His) + AMP + diphosphate + H(+). This is Histidine--tRNA ligase from Neisseria meningitidis serogroup B (strain ATCC BAA-335 / MC58).